The following is a 479-amino-acid chain: Serine palmitoyltransferase 1 (479 aa).

At 1 to 16 (MFLFDIYNNILYYTKE) the chain is on the lumenal side. The helical transmembrane segment at 17-37 (FIVTSTSPNLFIHGLMAVFII) threads the bilayer. Residues 38-479 (YLLTKRPFKP…KCTSFVLESN (442 aa)) are Cytoplasmic-facing.

It belongs to the class-II pyridoxal-phosphate-dependent aminotransferase family. In terms of assembly, forms a heterodimer with sptB. The cofactor is pyridoxal 5'-phosphate.

Its subcellular location is the endoplasmic reticulum membrane. It catalyses the reaction L-serine + hexadecanoyl-CoA + H(+) = 3-oxosphinganine + CO2 + CoA. The protein operates within lipid metabolism; sphingolipid metabolism. Component of serine palmitoyltransferase (SPT), which catalyzes the committed step in the synthesis of sphingolipids, the condensation of serine with palmitoyl CoA to form the long chain base 3-ketosphinganine. The chain is Serine palmitoyltransferase 1 (sptA) from Dictyostelium discoideum (Social amoeba).